The chain runs to 70 residues: Large ribosomal subunit protein bL31 (70 aa).

Zn(2+) contacts are provided by Cys-16, Cys-18, Cys-37, and Cys-40.

The protein belongs to the bacterial ribosomal protein bL31 family. Type A subfamily. As to quaternary structure, part of the 50S ribosomal subunit. It depends on Zn(2+) as a cofactor.

Functionally, binds the 23S rRNA. This is Large ribosomal subunit protein bL31 from Shewanella frigidimarina (strain NCIMB 400).